The following is a 1062-amino-acid chain: Roc-COR-CHAT protease (1062 aa).

LRR repeat units lie at residues 70–94, 95–116, 115–141, 142–159, 160–180, 181–203, 204–226, and 228–249; these read LAGLQGLYLAENDFSSLQLPGHLQQ, LRLLHLADNKELKTLEFAGSMP, MPLLEEIDLSDSGIQTLQLPACPALQK, LDVSRSKLEAFSFASACP, ALWWLDLSGNGELRKLKMPAG, FKALQYLYLYKSGIQELQINGKL, PKLVVLDLEGNQLKQWPEKLLLP, and GLETLYLEGNPIENIPETIRGS. Residues 470 to 660 form the COR domain; that stretch reads DWLGVMEELQ…GLMWKDNVVF (191 aa). Positions 836 to 856 are disordered; sequence ERDNDHTGLSDSSDQEDETFT. Active-site residues include histidine 931 and cysteine 980.

Functionally, a dedicated protease for substrate gasdermin bGSDM; cleaves the bGSDM precursor, releasing the pore-forming moiety, which integrates into the membrane and triggers cell death. Probably involved in defense against bacteriophages. Expression of bGSDM and this neighboring protease is highly toxic in E.coli. The protein is Roc-COR-CHAT protease of Unknown prokaryotic organism.